The sequence spans 512 residues: Cytochrome P450 monooxygenase FrzL (512 aa).

The chain crosses the membrane as a helical span at residues 6-26 (TMLAFVPYLAVFVACYGLVYY). Residue Cys-423 coordinates heme.

Belongs to the cytochrome P450 family. Requires heme as cofactor.

It localises to the membrane. Its function is as follows. Cytochrome P450 monooxygenase; part of the gene cluster that mediates the biosynthesis of the alkaloid (-)-FR901483, a potent immunosuppressant that shows efficacy in animal models and a probable inhibitor of purine nucleotide biosynthesis by targeting phosphoribosylpyrophosphate amidotransferase (PPAT). The only unassigned enzyme in the cluster is the second cytochrome P450 monooxygenase FrzL. The biosynthesis of (-)-FR901483 starts with the condensation of two L-tyrosines to yield (S,S)-dityrosyl-piperazine. This process occurs in 3 steps with the non-canonical nonribosomal peptide synthetase FrzA catalyzing the reduction of L-tyrosine into L-tyrosinal, the spontaneous condensation of 2 L-tyrosinal units, and the subsequent reduction by the NmrA-like family domain-containing oxidoreductase FrzB. The cytochrome P450 monooxygenase FrzC then performs coupling between N10 and C1' to morph the piperazine into a 1,4-diazabicyclo[3.2.1]octane spiro-fused to a 2,5-cyclohexadienone. The dienone portion is further reduced to cyclohexanone by the flavin-dependent reductase FrzD. The methyltranserases (MTs) FrzE and FrzF are then involved in the methylation at the C10' amine and the C4 phenolic oxygen, respectively. The order of the two MTs appear to be interchangeable. Cleavage of the C9-N10' bond by the dioxygenase FrzG then leads to formation of a conjugated iminium. In addition to the oxidation of C9, an additional dehydrogenation between C7 and C8 can occur to give a likely shunt product. The next biosynthetic step is the intramolecular aldol condensation catalyzed by the newly identified aldolase FrzH to yield an aza-tricyclic product with the formation of a C9-C3' bond. The short-chain dehydrogenase/reductase FrzI then produces dephospho-(-)-FR901483 that is phosphorylated at C4'-OH into (-)-FR901483 by the phosphotransferase FrzJ. In Cladobotryum sp, this protein is Cytochrome P450 monooxygenase FrzL.